The sequence spans 365 residues: Methylthioribose-1-phosphate isomerase (365 aa).

Residues 53 to 55 (RGA), arginine 90, and glutamine 201 contribute to the substrate site. The active-site Proton donor is the aspartate 242. Residue 252-253 (NK) coordinates substrate.

It belongs to the eIF-2B alpha/beta/delta subunits family. MtnA subfamily.

The enzyme catalyses 5-(methylsulfanyl)-alpha-D-ribose 1-phosphate = 5-(methylsulfanyl)-D-ribulose 1-phosphate. It participates in amino-acid biosynthesis; L-methionine biosynthesis via salvage pathway; L-methionine from S-methyl-5-thio-alpha-D-ribose 1-phosphate: step 1/6. Catalyzes the interconversion of methylthioribose-1-phosphate (MTR-1-P) into methylthioribulose-1-phosphate (MTRu-1-P). The sequence is that of Methylthioribose-1-phosphate isomerase from Methylorubrum extorquens (strain CM4 / NCIMB 13688) (Methylobacterium extorquens).